Consider the following 130-residue polypeptide: Small ribosomal subunit protein uS9 (130 aa).

The protein belongs to the universal ribosomal protein uS9 family.

This Methylibium petroleiphilum (strain ATCC BAA-1232 / LMG 22953 / PM1) protein is Small ribosomal subunit protein uS9.